The primary structure comprises 278 residues: tRNA pseudouridine synthase A (278 aa).

The active-site Nucleophile is Asp-61. Tyr-119 provides a ligand contact to substrate.

Belongs to the tRNA pseudouridine synthase TruA family. Homodimer.

It carries out the reaction uridine(38/39/40) in tRNA = pseudouridine(38/39/40) in tRNA. Formation of pseudouridine at positions 38, 39 and 40 in the anticodon stem and loop of transfer RNAs. This chain is tRNA pseudouridine synthase A, found in Oleidesulfovibrio alaskensis (strain ATCC BAA-1058 / DSM 17464 / G20) (Desulfovibrio alaskensis).